The primary structure comprises 564 residues: Probable lysosomal cobalamin transporter (564 aa).

The next 9 membrane-spanning stretches (helical) occupy residues 8 to 28, 41 to 61, 94 to 114, 144 to 164, 188 to 208, 312 to 332, 375 to 395, 418 to 438, and 506 to 526; these read LIWSVYGVAIAILIAVASTFI, VTLICIISITVLLATVLLLPV, TIVYYSLYTVDALLCLIGIPF, YTLFFVAILIVLFLVGFFIPT, ALTFSVGILTTLGLSLYIIYT, LLAGFVLLLAALFLWTSLCVT, VIFTLIVLFLFCSSVVGIAAF, LLLTSMLMLITLALNYSVAVI, and FFGAVFFWAQFIFLGLYLLVL.

The protein belongs to the LIMR family. LMBRD1 subfamily.

The protein localises to the lysosome membrane. In terms of biological role, probable lysosomal cobalamin transporter. Required to export cobalamin from lysosomes allowing its conversion to cofactors. This Aspergillus clavatus (strain ATCC 1007 / CBS 513.65 / DSM 816 / NCTC 3887 / NRRL 1 / QM 1276 / 107) protein is Probable lysosomal cobalamin transporter.